We begin with the raw amino-acid sequence, 346 residues long: Putative [LysW]-L-2-aminoadipate/[LysW]-L-glutamate phosphate reductase (346 aa).

12–15 (SGFT) contributes to the NADP(+) binding site. The active site involves Cys147. Residues 178 to 198 (GSSEGGAGGGDASSHPERSGV) form a disordered region. Residue Asn310 participates in NADP(+) binding.

The protein belongs to the NAGSA dehydrogenase family. Type 1 subfamily. LysY sub-subfamily.

Its subcellular location is the cytoplasm. It catalyses the reaction [amino-group carrier protein]-C-terminal-N-(1-carboxy-5-oxopentan-1-yl)-L-glutamine + phosphate + NADP(+) = [amino-group carrier protein]-C-terminal-N-(1-carboxy-5-phosphooxy-5-oxopentan-1-yl)-L-glutamine + NADPH + H(+). It carries out the reaction [amino-group carrier protein]-C-terminal-gamma-(L-glutamyl-5-semialdehyde)-L-glutamate + phosphate + NADP(+) = [amino-group carrier protein]-C-terminal-gamma-(5-phospho-L-glutamyl)-L-glutamate + NADPH + H(+). Its pathway is amino-acid biosynthesis; L-lysine biosynthesis via AAA pathway; L-lysine from L-alpha-aminoadipate (Thermus route): step 3/5. It participates in amino-acid biosynthesis; L-arginine biosynthesis. Functionally, involved in both the arginine and lysine biosynthetic pathways. The chain is Putative [LysW]-L-2-aminoadipate/[LysW]-L-glutamate phosphate reductase from Haloquadratum walsbyi (strain DSM 16790 / HBSQ001).